A 391-amino-acid polypeptide reads, in one-letter code: Trehalose-phosphate phosphatase (391 aa).

The Nucleophile role is filled by Asp-147. Residues Asp-147, Asp-149, and Asp-330 each coordinate Mg(2+). 147–149 contributes to the substrate binding site; it reads DFD.

Belongs to the trehalose phosphatase family. Requires Mg(2+) as cofactor.

It carries out the reaction alpha,alpha-trehalose 6-phosphate + H2O = alpha,alpha-trehalose + phosphate. The protein operates within glycan biosynthesis; trehalose biosynthesis. Removes the phosphate from trehalose 6-phosphate to produce free trehalose. The polypeptide is Trehalose-phosphate phosphatase (otsB) (Mycolicibacterium paratuberculosis (strain ATCC BAA-968 / K-10) (Mycobacterium paratuberculosis)).